The chain runs to 194 residues: UPF0232 protein in recF-gyrB intergenic region (194 aa).

Residues 1–14 (MTGPFDDDGPEEDA) show a composition bias toward acidic residues. A disordered region spans residues 1–81 (MTGPFDDDGP…GPGPDARDPQ (81 aa)). Residues 30-52 (DLVRRTLEEARGAARSQGKDVGR) are compositionally biased toward basic and acidic residues.

Belongs to the UPF0232 family.

This is UPF0232 protein in recF-gyrB intergenic region from Mycolicibacterium smegmatis (Mycobacterium smegmatis).